Consider the following 239-residue polypeptide: Large ribosomal subunit protein uL2 (239 aa).

The segment at 203–239 is disordered; that stretch reads PFGGKEHHPGKPTTTSRRAPPGRKVGHIAARRTGRRK. The span at 222–239 shows a compositional bias: basic residues; sequence PPGRKVGHIAARRTGRRK.

It belongs to the universal ribosomal protein uL2 family. As to quaternary structure, part of the 50S ribosomal subunit. Forms a bridge to the 30S subunit in the 70S ribosome.

Functionally, one of the primary rRNA binding proteins. Required for association of the 30S and 50S subunits to form the 70S ribosome, for tRNA binding and peptide bond formation. It has been suggested to have peptidyltransferase activity; this is somewhat controversial. Makes several contacts with the 16S rRNA in the 70S ribosome. The chain is Large ribosomal subunit protein uL2 from Pyrococcus abyssi (strain GE5 / Orsay).